Reading from the N-terminus, the 222-residue chain is Acyl-protein thioesterase 1 homolog 2 (222 aa).

Residues Ser116, Asp169, and His202 each act as charge relay system in the active site.

It belongs to the AB hydrolase superfamily. AB hydrolase 2 family.

It is found in the cytoplasm. The protein localises to the nucleus. The catalysed reaction is S-hexadecanoyl-L-cysteinyl-[protein] + H2O = L-cysteinyl-[protein] + hexadecanoate + H(+). In terms of biological role, hydrolyzes fatty acids from S-acylated cysteine residues in proteins with a strong preference for palmitoylated G-alpha proteins over other acyl substrates. Mediates the deacylation of G-alpha proteins such as GPA1 in vivo, but has weak or no activity toward palmitoylated Ras proteins. Has weak lysophospholipase activity in vitro; however such activity may not exist in vivo. The protein is Acyl-protein thioesterase 1 homolog 2 of Dictyostelium discoideum (Social amoeba).